Here is a 339-residue protein sequence, read N- to C-terminus: tRNA pseudouridine synthase D (339 aa).

The active-site Nucleophile is the Asp80. The region spanning 155–311 is the TRUD domain; it reads GFPNYFTEQR…AKGFSWAFEL (157 aa).

It belongs to the pseudouridine synthase TruD family.

It carries out the reaction uridine(13) in tRNA = pseudouridine(13) in tRNA. Responsible for synthesis of pseudouridine from uracil-13 in transfer RNAs. The polypeptide is tRNA pseudouridine synthase D (Haemophilus influenzae (strain PittEE)).